The primary structure comprises 155 residues: MADLSSLKDLGTAQEASAPVHVRKVDAQGRAYATGKRKNAIARVWVKPGTGKITVNGRDFPVYFARPVLQMILQQPVVAAARTGQFDVIATVTGGGLSGQAGAVRHGISKALTYFEPGLRSVLKKGGFLTRDSRVVERKKYGKAKARRSFQFSKR.

Belongs to the universal ribosomal protein uS9 family.

The sequence is that of Small ribosomal subunit protein uS9 from Allorhizobium ampelinum (strain ATCC BAA-846 / DSM 112012 / S4) (Agrobacterium vitis (strain S4)).